Here is a 432-residue protein sequence, read N- to C-terminus: MYYCISFTHKNTDIALREKLSFSNEAKKGEFLKIISTHENIEECLVISTCNRVEIVAFVKMACAEFIVKSLALLCDVDKDILLEKADIFEDSGAIHHLFSVASSLDSLVVGETQIAGQLKDAFAFAVKNNFCGVHLSRAVHSAFKCAAKVRNETQISKNSISVASVAVAKAKELADLTQKKAVVIGAGEMGELAAKHLIAAGAKVIILNRDLQKAKDLCERLGVLSEYDSLENLKKYLNQYEFFFSATNAPNAIITNSLIEELSYKRYFFDIAVPRDIDINENENISVFAVDDLEIVVQKNLALREQEARMAYGIIGRETSEFFRYLNDLALMPIIKAIRLQAKEYADKQLEIALKKGYLKKSDKEEARKLIHQVFKAFLHTPTVNLKHLQGKMQSDTVINAMRYVFDLQNNLEGLNQYKCEFDMENNDEIY.

Substrate contacts are provided by residues 49-52 (TCNR), Ser-107, 112-114 (ETQ), and Gln-118. Cys-50 (nucleophile) is an active-site residue. 186–191 (GAGEMG) is an NADP(+) binding site.

Belongs to the glutamyl-tRNA reductase family. In terms of assembly, homodimer.

The catalysed reaction is (S)-4-amino-5-oxopentanoate + tRNA(Glu) + NADP(+) = L-glutamyl-tRNA(Glu) + NADPH + H(+). Its pathway is porphyrin-containing compound metabolism; protoporphyrin-IX biosynthesis; 5-aminolevulinate from L-glutamyl-tRNA(Glu): step 1/2. In terms of biological role, catalyzes the NADPH-dependent reduction of glutamyl-tRNA(Glu) to glutamate 1-semialdehyde (GSA). The protein is Glutamyl-tRNA reductase of Campylobacter jejuni subsp. jejuni serotype O:2 (strain ATCC 700819 / NCTC 11168).